The following is a 243-amino-acid chain: Type III pantothenate kinase (243 aa).

7–14 lines the ATP pocket; it reads DLGNSRFK. Substrate-binding positions include Y91 and 98–101; that span reads GVDR. The active-site Proton acceptor is the D100. T122 serves as a coordination point for ATP. A substrate-binding site is contributed by T172.

This sequence belongs to the type III pantothenate kinase family. As to quaternary structure, homodimer. It depends on NH4(+) as a cofactor. Requires K(+) as cofactor.

The protein resides in the cytoplasm. It catalyses the reaction (R)-pantothenate + ATP = (R)-4'-phosphopantothenate + ADP + H(+). It participates in cofactor biosynthesis; coenzyme A biosynthesis; CoA from (R)-pantothenate: step 1/5. Functionally, catalyzes the phosphorylation of pantothenate (Pan), the first step in CoA biosynthesis. This Stenotrophomonas maltophilia (strain K279a) protein is Type III pantothenate kinase.